A 681-amino-acid chain; its full sequence is Angiomotin-like 2b (681 aa).

The segment covering 68-84 (GGGAASSSQSSSESLSQ) has biased composition (low complexity). The interval 68 to 106 (GGGAASSSQSSSESLSQDEPHSPQLSTRQEPQGQEHQVD) is disordered. Over residues 90–102 (PQLSTRQEPQGQE) the composition is skewed to polar residues. Tyrosine 126 carries the phosphotyrosine; by FGFR1 modification. 3 coiled-coil regions span residues 268 to 319 (NACS…LMKG), 362 to 441 (IEKL…LQAT), and 481 to 508 (VYTL…WEQK). Residues 589–618 (QLGALQPATADSSIISSHSTPAHTAQGKER) form a disordered region. Residues 597–611 (TADSSIISSHSTPAH) show a composition bias toward polar residues. Positions 678–681 (EIFI) match the PDZ-binding motif.

This sequence belongs to the angiomotin family. Interacts with SRC. Post-translationally, phosphorylation at Tyr-126 is necessary for efficient binding to SRC and synergistically functioning with SRC to activate the downstream MAPK pathway. As to expression, expressed in endothelial cells.

The protein resides in the recycling endosome. The protein localises to the cytoplasm. It localises to the cell projection. It is found in the podosome. Its subcellular location is the cell junction. In terms of biological role, required for proper architecture of actin filaments and for cell movements during embryogenesis. Plays a role in the radial actin fiber architecture in skin epithelial cells, thereby maintains cell geometry, size and cell interconnectivity within the skin. Plays an important role in coupling actin fibers to cell junctions in endothelial cells and is therefore required for correct endothelial cell morphology and maintenance of dorsal aorta lumen expansion during embryogenesis. May further play a role in the polarity, proliferation and migration of endothelial cells, and therefore participates in angiogenesis. May regulate the translocation of phosphorylated SRC to peripheral cell-matrix adhesion sites. This is Angiomotin-like 2b from Danio rerio (Zebrafish).